Consider the following 513-residue polypeptide: Putative GMP synthase [glutamine-hydrolyzing] (513 aa).

Residues methionine 8–asparagine 198 enclose the Glutamine amidotransferase type-1 domain. The active-site Nucleophile is the cysteine 85. The active site involves glutamate 174. Positions tryptophan 199 to arginine 388 constitute a GMPS ATP-PPase domain. Serine 226–serine 232 contributes to the ATP binding site.

As to quaternary structure, homodimer.

It catalyses the reaction XMP + L-glutamine + ATP + H2O = GMP + L-glutamate + AMP + diphosphate + 2 H(+). The protein operates within purine metabolism; GMP biosynthesis; GMP from XMP (L-Gln route): step 1/1. Its function is as follows. Catalyzes the synthesis of GMP from XMP. The chain is Putative GMP synthase [glutamine-hydrolyzing] (guaA) from Halalkalibacterium halodurans (strain ATCC BAA-125 / DSM 18197 / FERM 7344 / JCM 9153 / C-125) (Bacillus halodurans).